Here is a 4576-residue protein sequence, read N- to C-terminus: MGLPLARLVAACLVLALAKGSELQKEARSRNHVCSTWGDFHYKTFDGDVYRFPGLCDYNFASDCRDSYKEFAVHLKRGLGEAGGHSQIESILITIKDDTIYLTHKLAVVNGAMVSTPHYSSGLLIEKNDAYTKVYSRAGLSLMWNREDALMVELDSRFQNHTCGLCGDFNGMQTNYEFLSEEGIQFSAIEFGNMQKINKPEVQCEDPEAVQEPESCSEHRAECERLLTSAAFEDCQTRVPVESYVRACMHDRCQCPKGGACECSTLAEFSRQCSHAGGRPENWRTASLCPKKCPNNMVYLESSSPCVDTCSHLEVSSLCEEHYMDGCFCPEGTVYDDITGSGCIPVSQCHCKLHGHLYMPGQEFTNDCEQCVCNAGRWVCKDLPCPETCALEGGSHITTFDGKKFTFHGDCYYVLTKSEHNDSYALLGELASCGSTDKQTCLKTVVLLTDDKKNVVAFKSGGSVLLNEMEVTLPHVAASFSIFQPSSYHIVVNTKFGLRLQIQLLPVMQLFVTLDQAAQGQVQGLCGNFNGLESDDFMTSGGMVEATGAGFANTWKAQSSCHDKLDWLDDPCSLNIESANYAEHWCSLLKRSETPFARCHLAVDPTEYYKRCKYDTCNCQNNEDCMCAALSSYARACAAKGVMLWGWRERVCNKDVHACPSSQIFMYNLTTCQQTCRSLSEGDSHCLKGFAPVEGCGCPDHTFMDEKGRCVPLAKCSCYHHGLYLEAGDVILRQEERCICRNGRLQCTQVKLIGHTCQYPKILVDCNNLTALAVRKPRPTSCQTLVAGYYHTECISGCVCPDGLLDDGRGGCVEEDKCPCIHNKDLYSSGESIKLDCNNTCTCQKGRWECTRYACHSTCSIYGSGHYITFDGKHYDFDGHCSYVAVQDYCGQNSTGSFSIITENVPCGTTGVTCSKAIKIFIGGTELKLVDKHRVVKQLEEGHHVPYITREVGQYLVVEASSGIIVIWDKKTTIFIKLDPSYKGTVCGLCGNFDDQTKNDFTTRDHMVVTSELDFGNSWKEASTCPDVSHNPDPCSLNPHRRSWAEKQCSIIKSRVFKVCHSKVDPTVFYEACVHDSCSCDTGGDCDCFCSAVASYAQECTKAEACVFWRTPDLCPIFCDYYNPPDECEWHYEPCGNRSFETCRTLNGIHSNISVSYLEGCYPRCPEDRPIYDEDLKKCVTGDKCGCYIEDTRYPPGGSVPTDEICKSCTCTNTSKIECHPDEGKILNMTQDGIFCYWEFCGPNGTVGQHFNICGSSTAIPSTTTSFTTISTPISTTPISTTITTTTVTMTTEQVPCCFWSDWINKYHPTKENGGDRETFTHVCSAPEDIECRAATDPKLSWEELGQKVQCNVSTGLICNNEDQYGIGEFELCYDYEIRVNCCYPMEYCTPSTISPTTSTTTLSTTPPTSSPTTLPTSSPVTSSATLPTTSSITSTISPTTSPTTPLTTSPTTSPTTSPTTPSTTSPTTPTTTSPTTPSTTSPTTPSTTPSTTSPTTPSTTSPTTPTSTSPNTQSTTSPTTSPTTPSTTSPTTSPTTPSTTSPTISTTTSTISPTTPSTTSPNTPSTTSSTIPSTTSPTTPSTTSPTISTTTSTTSPTTPSTTSPTTPSTTSPTTPSTTSPTISTTTLTTSPTTPSTTSPTTPSTTSPTTPSTTSPTISITTSTISPTTPSTTSPTTLSTTSPTTPSTTSPTISTTTSTSPTTPSTTSPTTPSTPSSTTPSTTSPTTPSTTSPTISTTSSTISPTTPSTTSPTTPSTTSPTTPSTTSPTISTTTSTISPTTPSTTSPTTPSTTSPTTPSTTSPTISTTTSTISPTTPSTTSPTTPSTTSPNTPSTTSTTTSTTSPTTPSTTSPTISTTTSTTSPTTPSTTSPTISTTTSTTSPTTPSTTSPTTPSTTSPTTPSTTSPTTPSTTSPTISTTSSTISPTTPSTTSPTTPSTTSPTTPSTTSPTISTTTSTTSPTTPSTTSPTISTTTSTISPTTPSTSSPTTPSTTSPTTPSTTSPTISTTTSTTSPTTPSTTSPTTPSTTSPTISTTTSTTSPTTPSTTSPTISTTTSTTSPTTPSTTSPTTPSTTSPTTPSTTSPTTPSTTSPTISTTSSTISPTTPSTTSPTTPSTTSPTTPSTTSPTISTTTSTTSPTTPSTTSPTISTTTSTTSPTTPSTTSPTTPSTTSPTTPSTTSPTTPSTTSPTISTTSSTISPTTPSTTSPTTPSTTSPTTPSTTSPTISTTTSTTSPTTPSTTSPTISTTTSTISPTTPSTTSPITPSTTSPTTPSTTSPTISTTTSTTSPTTPSTTSPTISTTTSTISPTTPSTTSPITPSTTSPTTPSTTSPTISTTTSTISPTTPSTTSPTTPSTTSPTTLSTTSPTISTTTSTISPTTPSTTSPTTPSTTSPTTPSTTSPTTPSTTSPTISTTTSTISPTTSPTTPSTTSPTTHSTTSPTTPSTTSPTISTTTSTISPTTPSTTSLTTPSTTSPTTPSTTSPTTPSTTSPTISTTTSTISPTTPSTTSPTTPSTTSPTTPSTTSPNISTTTSTISPTTPSTTSPTTPSTTSPTTPSTTSPTISTTTSTISPTTPSTTSPTTPSTTSPTTPSTTSPTTPSTTSPTISTTTSTISPTTPSTTSPTTPSTTSPTTQSTTSPTISTNTPSTTSPTTPSTTSPTISTTTSTISPTTPSTTSPTTPSTTSPTTSSTTSPTISTTTSTISPTTPSTTSPTTPSTTSPTTPLTTSPTISTTTSTISPTTPSTTSPTTPSTTSPTTPSTTSPTTPSTTSPTISTTTSTISPTTPSTTSPTTSPTTPSTTSPTTSSTATQTISVTTSQTSSSATPPNSSPTSSATTSPTTSSGTSTATSPSTSPTTSSTFTTPPSTTCIDDCKWTGWLDSGKPTYDIKSGDFELIKGVCEPHWEVQNISCRAVMHSNIPLDQLGQIVVCNKEVGLVCKNEDQEIGGIIPMRMCLNYEINVYCCNPICFTSTPSSTTTETPTTTSTTKTSILTSTTTQTPSPSPTTTVTPTPAPTTTQIPTSTSTTTQTTTPTPITETSTPTSTISQTPSPASTTTVTPATTSTTTETSTSTSTTTQTTSPTPTVTETSTPRSTTTQTPSPVPTTTVTSTPTPTIGETTTPTTTITETFTPRSTTTQTSSPVPSTTVTPTPTPITTETSTSTPTTTQTTTPTPITETSTPISTTTHTPSPSSTTSTTSTQTPTPTTTGPSTSTSTTIQTTTPTPITETFTPTSTTTQTPSSTPTTTVTPTPTTTETSTSTSTTTQTTTPTPITETFTPTSTTTQTPSPTPTTTVNPTPTPTTIGPSTSTSTTTQTTTPTPTGTETSTPTSTTTQTPSPTPTTTVTPTPSPTTTETSTSTTTQTTTPTPTGTETSTPTSTTTQTPSPTPTTTVTPTPSPTTTETSTSTTTQTTTPTPITETSTPTSTTTQTPSPTPTTTVTPTSTPTTTGTSTSTSTTTQTTTPTPTGTETFTPRSTTTQTPSSSSTTSGTPTPTPTTTHTSTLTSTTEASTPTPIIETSTPKSTTIQTPSPSPTTTVTSPTTPTTTVKETSTPTNTVPTTGSTSSKPPTESSTPVTSQSTPSPPTESTTLSSTPVTTATSSTASSPGTTSPFVTSSAGSTPSSPPGSTPGPTTSSGMPTSSKTTTGPTSPTTRPPSTSTPTSFTVPTETTTQTRPLSTTPTTLETTRTSSWGTFSSTSPITSPSTVWTHTETQVTCCVLNEMFYGPGELVYNSTHGGTCFYVNCSLDCHLQFFNWSCPSTPSTPTPSTPTPTPSQTTTPSTTSSKSTPSTPQSTSPKSTLSTPTKTTPYGCPDFDPPRQVNETWWLCNCTMAICNHDNVVEIVPLKCDPPPMPTCANGLKPVRVPDADNCCWHWECDCYCTGWGDPHFVTFDGLYYSYQGNCTYVLVEEITPTVDNFGVYIDNYHCDANDKVSCPRTLIVRHETQEVQIKTVRMMPIEVEVQVNKQLVALPYKKYGLEVYESGINIVVNISRLEAKISYNGLSFSIRLPYKLFGNNTKGQCGTCTNNTADDCILPSGKIISDCEIAADEWLVNDPSKPHCPHKGLTTKRPATTTPGLSLNNCTVSPVCHLIMDSLFSQCHAFVPPKHYYEACLFDSCYVPGSNMECASVQAYATLCAKEGVCIDWRNHTQGVCSVKCPPHKQYQACGPEEEPTCQPSSSQNSTLLVEGCFCPEGTTKFAPGYDVCVKTCGCVGPDNVPREFGEHFEFDCKDCVCREGGSGIVCQPKKCSGGNQTTCEEDGTYLVVETNPDDKCCNITSCKCDTKRCKAERPTCLLGFEVKTEIVPGKCCPVYSCVPKGVCVHQNAEYQPGSPVYSNKCQDCVCTNILDNSTQLNVISCTHVPCNISCSSGFELVDVPGECCKKCQQTHCIIEGPKQQYIILKPGEIHKNPSNKCTFFSCMKINNQLISSVSNITCPDFNPSDCVSGSITYMPNGCCKTCIPQNQTRVPCSAVSVMKEISYNGCTKNISMNYCFGSCGTFAMYSAQVQGLDHRCSCCKEEKTSVRSVTLECPDGSELSHTYTHIESCLCQDTVCGLPQAQQVRTRRSSPRFLGRK.

Positions 1–20 are cleaved as a signal peptide; that stretch reads MGLPLARLVAACLVLALAKG. A Phosphoserine modification is found at Ser21. A VWFD 1 domain is found at 32-205; that stretch reads HVCSTWGDFH…KINKPEVQCE (174 aa). Cystine bridges form between Cys34-Cys166, Cys56-Cys204, Cys64-Cys163, Cys216-Cys253, Cys223-Cys248, Cys235-Cys273, Cys255-Cys261, Cys263-Cys289, Cys293-Cys327, Cys306-Cys319, Cys310-Cys349, Cys329-Cys343, Cys351-Cys373, Cys368-Cys385, Cys371-Cys380, Cys389-Cys526, Cys411-Cys561, Cys433-Cys441, Cys572-Cys617, Cys586-Cys612, Cys599-Cys637, Cys619-Cys625, Cys627-Cys652, Cys659-Cys696, Cys672-Cys686, Cys676-Cys716, Cys698-Cys710, Cys718-Cys740, and Cys738-Cys747. Residue Asp46 coordinates Ca(2+). Residues Met143 and Met151 each coordinate Cu(+). Glu153 lines the Cu(2+) pocket. Asn160 is a glycosylation site (N-linked (GlcNAc...) asparagine). Residues Asp168, Asn170, and Glu177 each coordinate Ca(2+). His275 contributes to the Cu(2+) binding site. One can recognise a TIL domain in the interval 293-349; that stretch reads CPNNMVYLESSSPCVDTCSHLEVSSLCEEHYMDGCFCPEGTVYDDITGSGCIPVSQC. His322 serves as a coordination point for Cu(2+). Met324 contributes to the Cu(+) binding site. Residues 387–562 form the VWFD 2 domain; sequence ETCALEGGSH…NTWKAQSSCH (176 aa). Asp401 contributes to the Ca(2+) binding site. An N-linked (GlcNAc...) asparagine glycan is attached at Asn421. Asn528, Asn530, Leu532, Asp535, and Asp536 together coordinate Ca(2+). An N-linked (GlcNAc...) asparagine glycan is attached at Asn668. N-linked (GlcNAc...) asparagine glycosylation is present at Asn768. Intrachain disulfides connect Cys782–Cys818, Cys800–Cys812, Cys820–Cys843, Cys837–Cys855, Cys841–Cys850, Cys859–Cys990, Cys881–Cys1025, Cys890–Cys987, Cys907–Cys914, Cys1035–Cys1078, Cys1049–Cys1073, Cys1060–Cys1100, Cys1080–Cys1088, Cys1090–Cys1115, Cys1106–Cys1135, Cys1119–Cys1161, Cys1143–Cys1185, Cys1165–Cys1179, Cys1187–Cys1211, Cys1206–Cys1236, and Cys1209–Cys1219. Asn838 carries N-linked (GlcNAc...) asparagine glycosylation. Positions 857 to 1026 constitute a VWFD 3 domain; sequence STCSIYGSGH…NSWKEASTCP (170 aa). Asp871 contributes to the Ca(2+) binding site. N-linked (GlcNAc...) asparagine glycosylation occurs at Asn893. Residues Asn992, Asp994, Asn999, and Asp1000 each contribute to the Ca(2+) site. 2 N-linked (GlcNAc...) asparagine glycosylation sites follow: Asn1137 and Asn1152. Asn1213, Asn1228, and Asn1244 each carry an N-linked (GlcNAc...) asparagine glycan. Thr1265, Thr1268, Thr1269, Thr1281, and Thr1292 each carry an O-linked (GalNAc) threonine glycan. Ca(2+) is bound by residues Asn1305, His1308, Gly1315, Asp1316, and Glu1318. Asn1352 carries N-linked (GlcNAc...) asparagine glycosylation. Ca(2+) is bound by residues Asp1375 and Tyr1376. 5 consecutive repeat copies span residues 1395 to 1415, 1416 to 1427, 1428 to 1437, 1438 to 1453, and 1454 to 1460. The interval 1395–2866 is disordered; sequence SPTTSTTTLS…PTTSSTFTTP (1472 aa). The 7B repeat unit spans residues 1478 to 1497; the sequence is PSTTSPTTPSTTPSTTSPTT. An 8A repeat occupies 1498–1510; the sequence is PSTTSPTTPTSTS. The stretch at 1530–1556 is one 9B repeat; it reads SPTTSPTTPSTTSPTISTTTSTISPTT. The stretch at 1557-1572 is one 10A repeat; it reads PSTTSPNTPSTTSSTI. The stretch at 1573-1588 is one 10B repeat; sequence PSTTSPTTPSTTSPTI. The stretch at 1589–1607 is one 11A repeat; it reads STTTSTTSPTTPSTTSPTT. The 11B repeat unit spans residues 1608–1634; the sequence is PSTTSPTTPSTTSPTISTTTLTTSPTT. 2 tandem repeats follow at residues 1635 to 1642 and 1665 to 1681. N-linked (GlcNAc...) asparagine glycosylation is found at Asn2529 and Asn2910. Low complexity-rich tracts occupy residues 2975-3623 and 3631-3706; these read PSST…GSTP and PGPT…TSPS. Residues 2975–3706 form a disordered region; it reads PSSTTTETPT…SSTSPITSPS (732 aa). 3 N-linked (GlcNAc...) asparagine glycosylation sites follow: Asn3734, Asn3745, and Asn3756. Residues 3764–3774 show a composition bias toward pro residues; it reads STPTPSTPTPT. Positions 3764–3806 are disordered; it reads STPTPSTPTPTPSQTTTPSTTSSKSTPSTPQSTSPKSTLSTPT. Residues 3775 to 3806 show a composition bias toward low complexity; it reads PSQTTTPSTTSSKSTPSTPQSTSPKSTLSTPT. Asn3823, Asn3830, and Asn3903 each carry an N-linked (GlcNAc...) asparagine glycan. The VWFD 4 domain maps to 3880–4063; sequence CYCTGWGDPH…VNDPSKPHCP (184 aa). 3 disulfide bridges follow: Cys3882–Cys4023, Cys3904–Cys4062, and Cys3928–Cys3936. Residues Asn3991, Asn4017, Asn4028, Asn4083, Asn4149, Asn4183, Asn4254, Asn4277, Asn4351, Asn4366, Asn4434, Asn4465, and Asn4488 are each glycosylated (N-linked (GlcNAc...) asparagine). 2 consecutive VWFC domains span residues 4213-4282 and 4320-4387; these read CVGP…TSCK and GVCV…KKCQ. 4 cysteine pairs are disulfide-bonded: Cys4471–Cys4518, Cys4485–Cys4532, Cys4494–Cys4548, and Cys4498–Cys4550. The CTCK domain occupies 4471–4556; it reads CSAVSVMKEI…SCLCQDTVCG (86 aa).

Homomultimer; disulfide-linked. The N- and C-terminus mediate their assembly into higher order structures to form filaments. The CTCK domains of two polypeptides associate in the endoplasmic reticulum to generate intermolecularly disulfide-bonded dimers. These dimers progress to the Golgi apparatus, which is a more acidic environment than the endoplasmic reticulum. Under acidic conditions, the N-termini form non-covalent intermolecular interactions that juxtapose assemblies of the third VWD domain (VWD3) from different CTCK-linked dimers. The VWD3 assemblies then become disulfide bonded to one another to produce long, disulfide-linked polymers that remain highly compact until secretion. Interacts with FCGBP. Interacts with AGR2; disulfide-linked. In terms of processing, O-glycosylated. O-glycosylation is required for mucin assembly. Goblet cells synthesize two forms of mucin that differ in branched chain O-glycosylation and the site of production in the colon. May undergo proteolytic cleavage in the outer mucus layer of the colon, contributing to the expanded volume and loose nature of this layer which allows for bacterial colonization in contrast to the inner mucus layer which is dense and devoid of bacteria. Post-translationally, at low pH of 6 and under, undergoes autocatalytic cleavage in vitro in the N-terminal region of the fourth VWD domain. It is likely that this also occurs in vivo and is triggered by the low pH of the late secretory pathway. Highly expressed in goblet cells of the colon with lower levels in the small intestine and no expression in the stomach (at protein level).

It localises to the secreted. Functionally, coats the epithelia of the intestines and other mucus membrane-containing organs to provide a protective, lubricating barrier against particles and infectious agents at mucosal surfaces. Major constituent of the colon mucus, which is mainly formed by large polymeric networks of MUC2 secreted by goblet cells that cover the exposed surfaces of intestine. MUC2 networks form hydrogels that guard the underlying epithelium from pathogens and other hazardous matter entering from the outside world, while permitting nutrient absorption and gas exchange. Acts as a divalent copper chaperone that protects intestinal cells from copper toxicity and facilitates nutritional copper unptake into cells. Binds both Cu(2+) and its reduced form, Cu(1+), at two juxtaposed binding sites: Cu(2+), once reduced to Cu(1+) by vitamin C (ascorbate) or other dietary antioxidants, transits to the other binding site. MUC2-bound Cu(1+) is protected from oxidation in aerobic environments, and can be released for nutritional delivery to cells. Mucin gels store antimicrobial molecules that participate in innate immunity. Mucin glycoproteins also house and feed the microbiome, lubricate tissue surfaces, and may facilitate the removal of contaminants and waste products from the body. Goblet cells synthesize two forms of MUC2 mucin that differ in branched chain O-glycosylation and the site of production in the colon: a (1) 'thick' mucus that wraps the microbiota to form fecal pellets is produced in the proximal, ascending colon. 'Thick' mucus transits along the descending colon and is lubricated by a (2) 'thin' MUC2 mucus produced in the distal colon which adheres to the 'thick' mucus. The sequence is that of Mucin-2 from Mus musculus (Mouse).